Here is a 754-residue protein sequence, read N- to C-terminus: Endoribonuclease Dicer-like (754 aa).

The 120-residue stretch at 132-251 folds into the PAZ domain; it reads QLMCDAKRLS…LPPELCLLLP (120 aa). RNase III domains lie at 298–418 and 613–734; these read FAIT…TGPN and AQTV…LACG. 6 residues coordinate Mn(2+): Glu336, Asp404, Glu407, Glu649, Asp720, and Glu723.

In terms of assembly, homodimer. Mg(2+) is required as a cofactor. Requires Mn(2+) as cofactor.

Involved in cleaving double-stranded RNA in the RNA interference (RNAi) pathway. It produces 21 to 23 bp dsRNAs (siRNAs) which target the selective destruction of homologous RNAs. The protein is Endoribonuclease Dicer-like of Giardia intestinalis (strain ATCC 50803 / WB clone C6) (Giardia lamblia).